The chain runs to 459 residues: tRNA modification GTPase MnmE (459 aa).

(6S)-5-formyl-5,6,7,8-tetrahydrofolate contacts are provided by R22, E85, and R124. The TrmE-type G domain occupies 221–380 (GLSTVIVGKP…LEIQIRDLFF (160 aa)). K(+) is bound at residue N231. GTP contacts are provided by residues 231 to 236 (NVGKSS), 250 to 256 (TEVAGTT), and 275 to 278 (DTAG). Mg(2+) is bound at residue S235. Residues T250, V252, and T255 each contribute to the K(+) site. T256 provides a ligand contact to Mg(2+). K459 is a binding site for (6S)-5-formyl-5,6,7,8-tetrahydrofolate.

Belongs to the TRAFAC class TrmE-Era-EngA-EngB-Septin-like GTPase superfamily. TrmE GTPase family. Homodimer. Heterotetramer of two MnmE and two MnmG subunits. The cofactor is K(+).

The protein resides in the cytoplasm. Exhibits a very high intrinsic GTPase hydrolysis rate. Involved in the addition of a carboxymethylaminomethyl (cmnm) group at the wobble position (U34) of certain tRNAs, forming tRNA-cmnm(5)s(2)U34. The sequence is that of tRNA modification GTPase MnmE from Staphylococcus aureus (strain USA300 / TCH1516).